We begin with the raw amino-acid sequence, 86 residues long: Large ribosomal subunit protein bL31B (86 aa).

It belongs to the bacterial ribosomal protein bL31 family. Type B subfamily. In terms of assembly, part of the 50S ribosomal subunit.

In Salmonella agona (strain SL483), this protein is Large ribosomal subunit protein bL31B.